We begin with the raw amino-acid sequence, 217 residues long: MSPRQQPRRIARELALLSLSQIKGNPENLEQQTLNDLILVAVRTLTLEIQETLETAAAEISRGNERILASDTKATNLKSAQTMVKEAISLTHNAINRLGTVIDFPEIVQLSSQYEVREYALELIGTVYRRRAEIEQELTGALVDWQLHRLPRIDRDILQIAVAEMLYLDLPQKVAINEAIELAKRYSDDEGYRFINGVLRRVTNKLNESEKAVSTQS.

It belongs to the NusB family.

In terms of biological role, involved in transcription antitermination. Required for transcription of ribosomal RNA (rRNA) genes. Binds specifically to the boxA antiterminator sequence of the ribosomal RNA (rrn) operons. The sequence is that of Transcription antitermination protein NusB from Microcystis aeruginosa (strain NIES-843 / IAM M-2473).